We begin with the raw amino-acid sequence, 117 residues long: Large ribosomal subunit protein bL20c (117 aa).

This sequence belongs to the bacterial ribosomal protein bL20 family.

The protein resides in the plastid. The protein localises to the chloroplast. In terms of biological role, binds directly to 23S ribosomal RNA and is necessary for the in vitro assembly process of the 50S ribosomal subunit. It is not involved in the protein synthesizing functions of that subunit. The chain is Large ribosomal subunit protein bL20c from Draba nemorosa (Woodland whitlowgrass).